Reading from the N-terminus, the 295-residue chain is Putative xyloglucan endotransglucosylase/hydrolase protein 1 (295 aa).

A signal peptide spans 1 to 24 (MNKMEYLSIFGFVSVLYLIIRVDA). The 199-residue stretch at 27–225 (YEVNGIDQSK…WSLAPFKANF (199 aa)) folds into the GH16 domain. Glu113 serves as the catalytic Nucleophile. Residue Glu117 is the Proton donor of the active site. Xyloglucan-binding positions include Glu117, 129 to 131 (QTN), and 139 to 141 (NRE). Residue Asn180 is glycosylated (N-linked (GlcNAc...) asparagine). Residues 204–205 (NW) and Gly209 each bind xyloglucan. Residues Asn215 and Asn229 are each glycosylated (N-linked (GlcNAc...) asparagine). Intrachain disulfides connect Cys233-Cys242 and Cys278-Cys291. Arg283 serves as a coordination point for xyloglucan.

Belongs to the glycosyl hydrolase 16 family. XTH group 1 subfamily. Post-translationally, contains at least one intrachain disulfide bond essential for its enzymatic activity.

Its subcellular location is the secreted. The protein resides in the cell wall. The protein localises to the extracellular space. It is found in the apoplast. It catalyses the reaction breaks a beta-(1-&gt;4) bond in the backbone of a xyloglucan and transfers the xyloglucanyl segment on to O-4 of the non-reducing terminal glucose residue of an acceptor, which can be a xyloglucan or an oligosaccharide of xyloglucan.. Functionally, may catalyze xyloglucan endohydrolysis (XEH) and/or endotransglycosylation (XET). Cleaves and religates xyloglucan polymers, an essential constituent of the primary cell wall, and thereby participates in cell wall construction of growing tissues. In Arabidopsis thaliana (Mouse-ear cress), this protein is Putative xyloglucan endotransglucosylase/hydrolase protein 1 (XTH1).